Consider the following 189-residue polypeptide: Probable chorismate pyruvate-lyase (189 aa).

3 residues coordinate substrate: R74, L113, and E175.

It belongs to the UbiC family.

The protein resides in the cytoplasm. The catalysed reaction is chorismate = 4-hydroxybenzoate + pyruvate. It participates in cofactor biosynthesis; ubiquinone biosynthesis. Its function is as follows. Removes the pyruvyl group from chorismate, with concomitant aromatization of the ring, to provide 4-hydroxybenzoate (4HB) for the ubiquinone pathway. In Azoarcus sp. (strain BH72), this protein is Probable chorismate pyruvate-lyase.